The primary structure comprises 68 residues: uncharacterized protein (68 aa).

This is an uncharacterized protein from Feline immunodeficiency virus (strain San Diego) (FIV).